A 136-amino-acid chain; its full sequence is Cytochrome c-550 (136 aa).

The N-terminal stretch at 1 to 28 (MTKLTFGALVALAMTAAASTAMSSKAMA) is a signal peptide. Heme c is bound by residues C41, C44, H45, and M107.

Post-translationally, binds 1 heme c group covalently per subunit. The N-terminus is blocked.

It localises to the periplasm. Functionally, plays a role in bacteroid respiration under conditions of oxygen limitation. Required for electron-transfer during denitrification. The protein is Cytochrome c-550 (cycA) of Bradyrhizobium diazoefficiens (strain JCM 10833 / BCRC 13528 / IAM 13628 / NBRC 14792 / USDA 110).